Here is a 498-residue protein sequence, read N- to C-terminus: Cytochrome P450 71B5 (498 aa).

The chain crosses the membrane as a helical span at residues 3-23; the sequence is IFLCFLLLLPLSLIFLKKLLP. Residue Cys439 participates in heme binding.

It belongs to the cytochrome P450 family. Heme is required as a cofactor.

Its subcellular location is the membrane. The chain is Cytochrome P450 71B5 (CYP71B5) from Arabidopsis thaliana (Mouse-ear cress).